A 426-amino-acid polypeptide reads, in one-letter code: Synaptotagmin-13 (426 aa).

Residues Met1–Pro6 are Vesicular-facing. Residues Val7 to Leu29 traverse the membrane as a helical segment. Residues Cys30–Leu426 lie on the Cytoplasmic side of the membrane. 2 consecutive C2 domains span residues Gln158–Gly275 and Gly287–His422.

This sequence belongs to the synaptotagmin family. Interacts with NRXN1. As to expression, expressed in brain, pancreas and kidney.

The protein resides in the membrane. May be involved in transport vesicle docking to the plasma membrane. This chain is Synaptotagmin-13 (SYT13), found in Homo sapiens (Human).